The sequence spans 635 residues: Cell pattern formation-associated protein stuA (635 aa).

2 disordered regions span residues 1–21 (MNQT…AQPY) and 63–82 (SGVA…MSSQ). Positions 129–235 (RVTATLWEDE…HNIGGLLYHP (107 aa)) constitute an HTH APSES-type domain. Positions 163–184 (GTKLLNVAGMTRGRRDGILKSE) form a DNA-binding region, H-T-H motif. 2 disordered regions span residues 246 to 480 (QESQ…ASRS) and 498 to 635 (SQLT…PRRR). Low complexity-rich tracts occupy residues 276–294 (MQTS…SSQP) and 312–325 (SASS…QSSS). Residues 326 to 355 (YDWNNQGMNSGVPNTQPLSIDTTLSNTRSM) show a composition bias toward polar residues. Over residues 356-380 (PTTPATTPPGNNLQGMQSYQSQSGY) the composition is skewed to low complexity. The segment covering 460–469 (APEHESEYVQ) has biased composition (basic and acidic residues). Composition is skewed to polar residues over residues 498–513 (SQLT…QNGS) and 539–571 (AASS…TAPT). A nuclear localization domain region spans residues 582–605 (KRGREDDDMGRPDSQGDYESKRRR). Residues 583–592 (RGREDDDMGR) are compositionally biased toward basic and acidic residues.

Belongs to the EFG1/PHD1/stuA family.

Functionally, transcription factor that regulates asexual reproduction. Binds the StuA-response elements (StRE) with the consensus sequence 5'-(A/T)CGCG(T/A)N(A/C)-3' at the promoters of target genes. Controls the expression of 6 secondary metabolite biosynthetic clusters including 2 involved in the synthesis of alkaloids (fumigaclavine and fumitremorgen), 2 clusters of the ETP class (gliotoxin and an unknown ETP-like toxin), a cluster predicted to produce pseurotin A, and the product of the last cluster is unknown. Controls the production of ergot alkaloids during conidiophore development. Controls expression of sspA and gliP. Involved in the induction of immunoglobulin E-independent mast cell degranulation. In Aspergillus fumigatus (strain ATCC MYA-4609 / CBS 101355 / FGSC A1100 / Af293) (Neosartorya fumigata), this protein is Cell pattern formation-associated protein stuA.